The primary structure comprises 846 residues: Probable tape measure protein (846 aa).

A coiled-coil region spans residues 59 to 82; it reads MRNIAELRGQYDRLGRTIDQVQAK.

It belongs to the P2likevirus tape measure protein family.

Functionally, serves as a base for tail tube protein polymerization and acts as a template for tail length determination. In Burkholderia phage BcepMu (isolate -/United States/Summer/2002) (Bacteriophage BcepMu), this protein is Probable tape measure protein.